Here is a 688-residue protein sequence, read N- to C-terminus: Pentatricopeptide repeat-containing protein At3g18020 (688 aa).

17 PPR repeats span residues 53–88 (DRAYWRRRIHSICAVRRNPDEALRILDGLCLRGYRP), 89–123 (DSLNLSSVIHSLCDAGRFDEAHRRFLLFLASGFIP), 124–158 (DERTCNVIIARLLYSRSPVSTLGVIHRLIGFKKEF), 161–195 (SLTNYNRLMNQLCTIYRVIDAHKLVFDMRNRGHLP), 196–230 (DVVTFTTLIGGYCEIRELEVAHKVFDEMRVCGIRP), 231–261 (NSLTLSVLIGGFLKMRDVETGRKLMKELWEY), 271–305 (KAAAFANLVDSMCREGYFNDIFEIAENMSLCESVN), 306–340 (VEFAYGHMIDSLCRYRRNHGAARIVYIMKSKGLKP), 341–375 (RRTSYNAIIHGLCKDGGCMRAYQLLEEGSEFEFFP), 376–406 (SEYTYKLLMESLCKELDTGKARNVLELMLRK), 411–445 (RTRIYNIYLRGLCVMDNPTEILNVLVSMLQGDCRP), 446–480 (DEYTLNTVINGLCKMGRVDDAMKVLDDMMTGKFCA), 482–517 (DAVTLNTVMCGLLAQGRAEEALDVLNRVMPENKIKP), 518–552 (GVVAYNAVIRGLFKLHKGDEAMSVFGQLEKASVTA), 553–583 (DSTTYAIIIDGLCVTNKVDMAKKFWDDVIWP), 588–622 (DAFVYAAFLKGLCQSGYLSDACHFLYDLADSGAIP), and 623–657 (NVVCYNTVIAECSRSGLKREAYQILEEMRKNGQAP).

This sequence belongs to the PPR family. P subfamily.

This Arabidopsis thaliana (Mouse-ear cress) protein is Pentatricopeptide repeat-containing protein At3g18020.